Consider the following 1319-residue polypeptide: DNA-directed RNA polymerase subunit beta' (1319 aa).

Positions 60, 62, 75, and 78 each coordinate Zn(2+). 3 residues coordinate Mg(2+): D535, D537, and D539. 4 residues coordinate Zn(2+): C890, C971, C978, and C981.

The protein belongs to the RNA polymerase beta' chain family. In terms of assembly, the RNAP catalytic core consists of 2 alpha, 1 beta, 1 beta' and 1 omega subunit. When a sigma factor is associated with the core the holoenzyme is formed, which can initiate transcription. Mg(2+) is required as a cofactor. Requires Zn(2+) as cofactor.

The catalysed reaction is RNA(n) + a ribonucleoside 5'-triphosphate = RNA(n+1) + diphosphate. Its function is as follows. DNA-dependent RNA polymerase catalyzes the transcription of DNA into RNA using the four ribonucleoside triphosphates as substrates. The sequence is that of DNA-directed RNA polymerase subunit beta' from Mycobacteroides abscessus (strain ATCC 19977 / DSM 44196 / CCUG 20993 / CIP 104536 / JCM 13569 / NCTC 13031 / TMC 1543 / L948) (Mycobacterium abscessus).